A 502-amino-acid chain; its full sequence is 4,4'-diapophytoene desaturase (4,4'-diaponeurosporene-forming) (502 aa).

Residue 5–17 (VIGAGVTGLAAAA) coordinates FAD.

The protein belongs to the carotenoid/retinoid oxidoreductase family. CrtN subfamily.

The enzyme catalyses 15-cis-4,4'-diapophytoene + 3 FAD + 3 H(+) = all-trans-4,4'-diaponeurosporene + 3 FADH2. It functions in the pathway carotenoid biosynthesis; staphyloxanthin biosynthesis; staphyloxanthin from farnesyl diphosphate: step 2/5. Its function is as follows. Involved in the biosynthesis of the yellow-orange carotenoid staphyloxanthin, which plays a role in the virulence via its protective function against oxidative stress. Catalyzes three successive dehydrogenation reactions that lead to the introduction of three double bonds into 4,4'-diapophytoene (dehydrosqualene), with 4,4'-diapophytofluene and 4,4'-diapo-zeta-carotene as intermediates, and 4,4'-diaponeurosporene (the major deep-yellow pigment in staphylococci strains) as the end product. The sequence is that of 4,4'-diapophytoene desaturase (4,4'-diaponeurosporene-forming) from Staphylococcus aureus (strain USA300).